The primary structure comprises 130 residues: Small ribosomal subunit protein uS8 (130 aa).

This sequence belongs to the universal ribosomal protein uS8 family. Part of the 30S ribosomal subunit. Contacts proteins S5 and S12.

Functionally, one of the primary rRNA binding proteins, it binds directly to 16S rRNA central domain where it helps coordinate assembly of the platform of the 30S subunit. The protein is Small ribosomal subunit protein uS8 of Glaesserella parasuis serovar 5 (strain SH0165) (Haemophilus parasuis).